The primary structure comprises 256 residues: Large ribosomal subunit protein bL28m (256 aa).

The N-terminal 55 residues, 1-55 (MPLHKVPVGLWKRLRLREGIYSRLPAHYLRSLEEARTPTPVHFRPHGAKFKINPK), are a transit peptide targeting the mitochondrion.

It belongs to the bacterial ribosomal protein bL28 family. In terms of assembly, component of the mitochondrial ribosome large subunit (39S) which comprises a 16S rRNA and about 50 distinct proteins. Interacts with OXA1L.

It is found in the mitochondrion. This is Large ribosomal subunit protein bL28m (MRPL28) from Bos taurus (Bovine).